The sequence spans 655 residues: Sphingomyelin phosphodiesterase 3 (655 aa).

Residues 1 to 10 (MVLYTTPFPN) lie on the Cytoplasmic side of the membrane. An intramembrane region (helical) is located at residues 11–31 (SCLSALHCVSWALIFPCYWLV). The Cytoplasmic portion of the chain corresponds to 32–64 (DRLAASFIPTTYEKRQRADDPCCLQLLCTALFT). 3 S-palmitoyl cysteine lipidation sites follow: Cys-53, Cys-54, and Cys-59. Positions 65–85 (PIYLALLVASLPFAFLGFLFW) form an intramembrane region, helical. At 86–655 (SPLQSARRPY…LMVSSGEEEA (570 aa)) the chain is on the cytoplasmic side. Ser-178 bears the Phosphoserine mark. Residues 210 to 319 (VEYKGDGGRH…DTSASGEPGA (110 aa)) are disordered. 2 stretches are compositionally biased toward basic and acidic residues: residues 212–222 (YKGDGGRHPGD) and 248–257 (GGEEGGRPPE). Polar residues predominate over residues 279–299 (TPNHNQQDGDSGSLGSPSASR). Residue Ser-291 is modified to Phosphoserine. Glu-364 lines the Mg(2+) pocket. S-palmitoyl cysteine attachment occurs at residues Cys-397 and Cys-398. The active-site Proton acceptor is His-639.

Belongs to the neutral sphingomyelinase family. Mg(2+) is required as a cofactor. In terms of processing, palmitoylated, palmitoylation-deficient proteins are targeted for lysosomal degradation. In terms of tissue distribution, predominantly expressed in brain.

The protein localises to the golgi apparatus membrane. It is found in the cell membrane. The catalysed reaction is a sphingomyelin + H2O = phosphocholine + an N-acylsphing-4-enine + H(+). It catalyses the reaction N-(15Z-tetracosenoyl)sphing-4-enine-1-phosphocholine + H2O = N-(15Z-tetracosenoyl)-sphing-4-enine + phosphocholine + H(+). The enzyme catalyses N-(tetracosanoyl)-sphing-4-enine-1-phosphocholine + H2O = N-tetracosanoyl-sphing-4-enine + phosphocholine + H(+). It carries out the reaction an N-(acyl)-sphingosylphosphocholine + H2O = an N-acyl-sphingoid base + phosphocholine + H(+). The catalysed reaction is 1-hexadecanoyl-sn-glycero-3-phosphocholine + H2O = 1-hexadecanoyl-sn-glycerol + phosphocholine + H(+). It catalyses the reaction 1-O-octadecyl-sn-glycero-3-phosphocholine + H2O = 1-O-octadecyl-sn-glycerol + phosphocholine + H(+). The enzyme catalyses a sphingosylphosphocholine + H2O = a sphingoid base + phosphocholine + H(+). It carries out the reaction N-(hexadecanoyl)-sphing-4-enine-1-phosphocholine + H2O = N-hexadecanoylsphing-4-enine + phosphocholine + H(+). It functions in the pathway lipid metabolism; sphingolipid metabolism. Inhibited by nSMase inhibitor GW4869. Binding of anionic phospholipids (APLs) such as phosphatidylserine (PS) and phosphatidic acid (PA) increases enzymatic activity. In terms of biological role, catalyzes the hydrolysis of sphingomyelin to form ceramide and phosphocholine. Ceramide mediates numerous cellular functions, such as apoptosis and growth arrest, and is capable of regulating these 2 cellular events independently. Also hydrolyzes sphingosylphosphocholine. Regulates the cell cycle by acting as a growth suppressor in confluent cells. Probably acts as a regulator of postnatal development and participates in bone and dentin mineralization. Binds to anionic phospholipids (APLs) such as phosphatidylserine (PS) and phosphatidic acid (PA) that modulate enzymatic activity and subcellular location. May be involved in IL-1-beta-induced JNK activation in hepatocytes. May act as a mediator in transcriptional regulation of NOS2/iNOS via the NF-kappa-B activation under inflammatory conditions. This chain is Sphingomyelin phosphodiesterase 3, found in Homo sapiens (Human).